Reading from the N-terminus, the 214-residue chain is Sugar fermentation stimulation protein homolog (214 aa).

This sequence belongs to the SfsA family.

The protein is Sugar fermentation stimulation protein homolog of Aquifex aeolicus (strain VF5).